A 31-amino-acid chain; its full sequence is Protamine-Z (31 aa).

The segment at 1–31 (ARRRRSRRASRPVRRRRPRRVSRRRRARRRR) is disordered.

As to expression, testis.

It localises to the nucleus. Its subcellular location is the chromosome. Its function is as follows. Protamines substitute for histones in the chromatin of sperm during the haploid phase of spermatogenesis. They compact sperm DNA into a highly condensed, stable and inactive complex. The sequence is that of Protamine-Z from Clupea harengus (Atlantic herring).